A 339-amino-acid polypeptide reads, in one-letter code: Alpha-N-dichloroacetyl-p-aminophenylserinol N-oxygenase (339 aa).

The span at 1–19 (MRDHTDEKSEAAGNDDGHV) shows a compositional bias: basic and acidic residues. The tract at residues 1–22 (MRDHTDEKSEAAGNDDGHVRIG) is disordered. The Fe cation site is built by glutamate 109, glutamate 144, histidine 147, glutamate 205, histidine 232, glutamate 236, and histidine 239.

This sequence belongs to the AurF N-oxygenase family. Requires Fe(2+) as cofactor.

It catalyses the reaction alpha-N-dichloroacetyl-p-aminophenylserinol + AH2 + 2 O2 = chloramphenicol + A + 2 H2O. The protein operates within antibiotic biosynthesis. Involved in chloramphenicol biosynthesis. Catalyzes the six-electron oxidation of an aryl-amine precursor of chloramphenicol (NH2-CAM) to yield the aryl-nitro group of chloramphenicol (CAM). During catalysis, upon exposure of the diferrous cluster to O(2), ClmI forms an exceptionally long-lived peroxo intermediate (CmlI-peroxo), which reacts with NH2-CAM to form CAM. In Streptomyces venezuelae (strain ATCC 10712 / CBS 650.69 / DSM 40230 / JCM 4526 / NBRC 13096 / PD 04745), this protein is Alpha-N-dichloroacetyl-p-aminophenylserinol N-oxygenase.